The sequence spans 312 residues: MGKSKVLVVGGTGYVGRRIVKASLEHGHETFILQRPEIGLDIEKLQILLSFKKQGAILVEASFSDHKSLVDAVKLVDVVICTMSGVHFRSHNLLTQLKLVEAIKDAGNIKRFLPSEFGMDPALMGHALEPGRVTFDEKMTVRKAIEEANIPFTYISANCFAGYFAGNLSQMKTLLPPRDKVLLYGDGNVKPVYMDEDDVATYTIKTIDDPRTLNKTVYLRPPENILTHKELIEKWEELIGKQLEKNSISEKDFLSTLKGLDFASQVGVGHFYHIFYEGCLTNFEIGENGEEASELYPEVNYTRMDQYLKVYV.

NADP(+)-binding positions include 10–16 (GGTGYVG), arginine 35, and lysine 44. Residue lysine 138 is the Proton acceptor of the active site. Position 142 (arginine 142) interacts with NADP(+). Histidine 270 lines the substrate pocket.

This sequence belongs to the NmrA-type oxidoreductase family. Isoflavone reductase subfamily.

This chain is Isoflavone reductase homolog, found in Lupinus albus (White lupine).